The primary structure comprises 582 residues: Semenogelin-2 (582 aa).

The N-terminal stretch at 1 to 23 (MKSIILFVLSLLLILEKQAAVMG) is a signal peptide. Disordered regions lie at residues 25–65 (KGGS…SSSI), 91–157 (HKTT…GISS), 171–192 (LSKEQASASGAQKGRTQGGSQS), 272–366 (NLNQ…KDIQ), and 393–557 (SNQD…HNTV). Positions 50 to 59 (GQKDKQHTES) are enriched in basic and acidic residues. Basic residues predominate over residues 111–134 (QKGRDHVKPKRHFRLIVIHRKGGQ). Composition is skewed to polar residues over residues 137-157 (HGTQNPSQNQGNSPSGKGISS) and 174-192 (EQASASGAQKGRTQGGSQS). Over residues 293–310 (TEERQFNHGEKSVQKDVP) the composition is skewed to basic and acidic residues. A compositionally biased stretch (polar residues) spans 325 to 335 (KSQNQVSIPSQ). Basic and acidic residues-rich tracts occupy residues 336–345 (DQEHGHKENK), 353–366 (TEERRLNCGEKDIQ), 396–405 (DQEHGHKENK), and 413–426 (TEERRLNGGEKDIQ). Polar residues-rich tracts occupy residues 427 to 437 (KSVSKGSISIQ) and 445 to 455 (KSQNQVTIPSQ). Positions 456–465 (DQEHGHKENK) are enriched in basic and acidic residues. Composition is skewed to polar residues over residues 487–498 (KDVSQSSLSFQT) and 506–529 (SQIQTPNPNQDQWSGLNAKGNSGK). Over residues 530-546 (SADREQDLLSHEQESRY) the composition is skewed to basic and acidic residues. The segment covering 547-557 (QQKSSGAHNTV) has biased composition (polar residues).

Belongs to the semenogelin family. As to quaternary structure, interacts with SERPINA5.

The protein localises to the secreted. Its function is as follows. Participates in the formation of a gel matrix (sperm coagulum) entrapping the accessory gland secretions and ejaculated spermatozoa. This chain is Semenogelin-2 (SEMG2), found in Colobus guereza (Mantled guereza).